Consider the following 439-residue polypeptide: MEKTDLHVNLIEKVMVGPSPPLPKTTLQLSSIDNLPGVRGSIFNALLIYNASPSPTMISADPAKPIREALAKILVYYPPFAGRLRETENGDLEVECTGEGAMFLEAMADNELSVLGDFDDSNPSFQQLLFSLPLDTNFKDLSLLVVQVTRFTCGGFVVGVSFHHGVCDGRGAAQFLKGLAEMARGEVKLSLEPIWNRELVKLDDPKYLQFFHFEFLRAPSIVEKIVQTYFIIDFETINYIKQSVMEECKEFCSSFEVASAMTWIARTRAFQIPESEYVKILFGMDMRNSFNPPLPSGYYGNSIGTACAVDNVQDLLSGSLLRAIMIIKKSKVSLNDNFKSRAVVKPSELDVNMNHENVVAFADWSRLGFDEVDFGWGNAVSVSPVQQQSALAMQNYFLFLKPSKNKPDGIKILMFLPLSKMKSFKIEMEAMMKKYVAKV.

Catalysis depends on proton acceptor residues His164 and Asp373.

It belongs to the plant acyltransferase family.

It catalyses the reaction taxa-4(20),11-dien-5alpha-ol + acetyl-CoA = taxa-4(20),11-dien-5alpha-yl acetate + CoA. Its pathway is alkaloid biosynthesis; taxol biosynthesis; 10-deacetyl-2-debenzoylbaccatin III from taxa-4(20),11-dien-5alpha-ol: step 1/3. This is Taxadien-5-alpha-ol O-acetyltransferase (TAT) from Taxus cuspidata (Japanese yew).